We begin with the raw amino-acid sequence, 142 residues long: Universal stress protein C (142 aa).

It belongs to the universal stress protein A family.

Its subcellular location is the cytoplasm. Required for resistance to DNA-damaging agents. In Salmonella typhimurium (strain LT2 / SGSC1412 / ATCC 700720), this protein is Universal stress protein C (uspC).